Reading from the N-terminus, the 398-residue chain is Ornithine aminotransferase (398 aa).

Lysine 256 is modified (N6-(pyridoxal phosphate)lysine).

This sequence belongs to the class-III pyridoxal-phosphate-dependent aminotransferase family. OAT subfamily. Pyridoxal 5'-phosphate serves as cofactor.

It localises to the cytoplasm. The enzyme catalyses a 2-oxocarboxylate + L-ornithine = L-glutamate 5-semialdehyde + an L-alpha-amino acid. It functions in the pathway amino-acid biosynthesis; L-proline biosynthesis; L-glutamate 5-semialdehyde from L-ornithine: step 1/1. In terms of biological role, catalyzes the interconversion of ornithine to glutamate semialdehyde. The polypeptide is Ornithine aminotransferase (Halalkalibacterium halodurans (strain ATCC BAA-125 / DSM 18197 / FERM 7344 / JCM 9153 / C-125) (Bacillus halodurans)).